A 416-amino-acid polypeptide reads, in one-letter code: Phosphoglycerate kinase (416 aa).

(2R)-3-phosphoglycerate is bound by residues valine 23, aspartate 24, phenylalanine 25, asparagine 26, glutamine 39, arginine 40, serine 63, histidine 64, glycine 66, arginine 67, leucine 122, arginine 123, histidine 170, and arginine 171. Residue glycine 214 participates in ADP binding. Residue glycine 214 coordinates CDP. Positions 215 and 216 each coordinate AMP. Alanine 215 is a binding site for ATP. Position 215 (alanine 215) interacts with Mg(2+). Aspartate 219 lines the CDP pocket. Aspartate 219 provides a ligand contact to Mg(2+). An AMP-binding site is contributed by lysine 220. Lysine 220 serves as a coordination point for ATP. Glycine 238 is an ADP binding site. Glycine 238 lines the CDP pocket. AMP-binding residues include glycine 239 and glycine 312. Glycine 239 and glycine 312 together coordinate ATP. CDP is bound by residues glycine 337, alanine 339, and phenylalanine 342. Phenylalanine 342 is a binding site for ADP. Residue glutamate 343 participates in AMP binding. ATP-binding residues include glutamate 343, aspartate 374, and threonine 375. Aspartate 374 provides a ligand contact to Mg(2+).

The protein belongs to the phosphoglycerate kinase family. Monomer. Mg(2+) serves as cofactor.

It localises to the cytoplasm. The protein resides in the mitochondrion. It carries out the reaction (2R)-3-phosphoglycerate + ATP = (2R)-3-phospho-glyceroyl phosphate + ADP. Its pathway is carbohydrate degradation; glycolysis; pyruvate from D-glyceraldehyde 3-phosphate: step 2/5. Catalyzes one of the two ATP producing reactions in the glycolytic pathway via the reversible conversion of 1,3-diphosphoglycerate to 3-phosphoglycerate. Both L- and D- forms of purine and pyrimidine nucleotides can be used as substrates, but the activity is much lower on pyrimidines. Negatively regulates the biosynthesis of acetyl-CoA from pyruvate in the mitochondrion. This chain is Phosphoglycerate kinase (pgk1), found in Hypocrea jecorina (Trichoderma reesei).